Reading from the N-terminus, the 378-residue chain is Chloroplast stem-loop binding protein of 41 kDa b, chloroplastic (378 aa).

The transit peptide at Met-1–Ala-50 directs the protein to the chloroplast. Phosphoserine is present on Ser-240.

This sequence belongs to the NAD(P)-dependent epimerase/dehydratase family. In terms of assembly, component of a complex made of CSP41A, CSP41B, ribosomes, and the plastid-encoded RNA polymerase. Interacts with CSP41A. Binds DNA when in complex with PRIN2. As to expression, highly expressed in seedlings, particularly in photosynthetically active organs. Mostly expressed in young and mature leaves, and, to a lower extent, in flowers. Low expression in etiolated seedlings compared to green seedlings.

It localises to the plastid. The protein resides in the chloroplast. It is found in the plastoglobule. Its subcellular location is the cytoplasm. Its function is as follows. Binds and cleaves RNA, particularly in stem-loops. Associates with pre-ribosomal particles in chloroplasts, and participates in chloroplast ribosomal RNA metabolism, probably during the final steps of 23S rRNA maturation. May enhance transcription by the plastid-encoded polymerase and translation in plastid via the stabilization of ribosome assembly intermediates. Required for chloroplast integrity. Involved in the regulation of the circadian system. Involved in the regulation of heteroglycans and monosaccharide mobilization. Required for full expression of genes transcribed by the plastid-encoded RNA polymerase (PEP). Essential for embryo development. The chain is Chloroplast stem-loop binding protein of 41 kDa b, chloroplastic (CSP41B) from Arabidopsis thaliana (Mouse-ear cress).